The chain runs to 124 residues: Small ribosomal subunit protein uS12 (124 aa).

Position 90 is a 3-methylthioaspartic acid (Asp90).

This sequence belongs to the universal ribosomal protein uS12 family. Part of the 30S ribosomal subunit. Contacts proteins S8 and S17. May interact with IF1 in the 30S initiation complex.

Its function is as follows. With S4 and S5 plays an important role in translational accuracy. Functionally, interacts with and stabilizes bases of the 16S rRNA that are involved in tRNA selection in the A site and with the mRNA backbone. Located at the interface of the 30S and 50S subunits, it traverses the body of the 30S subunit contacting proteins on the other side and probably holding the rRNA structure together. The combined cluster of proteins S8, S12 and S17 appears to hold together the shoulder and platform of the 30S subunit. This is Small ribosomal subunit protein uS12 from Wolbachia pipientis wMel.